Here is a 218-residue protein sequence, read N- to C-terminus: Probable transaldolase (218 aa).

The active-site Schiff-base intermediate with substrate is the lysine 83.

The protein belongs to the transaldolase family. Type 3B subfamily.

Its subcellular location is the cytoplasm. It carries out the reaction D-sedoheptulose 7-phosphate + D-glyceraldehyde 3-phosphate = D-erythrose 4-phosphate + beta-D-fructose 6-phosphate. It functions in the pathway carbohydrate degradation; pentose phosphate pathway; D-glyceraldehyde 3-phosphate and beta-D-fructose 6-phosphate from D-ribose 5-phosphate and D-xylulose 5-phosphate (non-oxidative stage): step 2/3. Its function is as follows. Transaldolase is important for the balance of metabolites in the pentose-phosphate pathway. This is Probable transaldolase from Thermotoga sp. (strain RQ2).